Here is a 159-residue protein sequence, read N- to C-terminus: Protein C2 (159 aa).

A Nuclear localization signal motif is present at residues 43–60; it reads KKRPPKLTWAPKKKRRKA. A zinc finger spans residues 65-81; it reads CGCSYYGGIDCEDGFTH. Residues 102 to 139 form a disordered region; it reads PNLLPPPEHNNNGDGEQNNNITNQSQPQPAESVGSPDL. Positions 110 to 124 are enriched in low complexity; that stretch reads HNNNGDGEQNNNITN.

The protein belongs to the geminiviridae transcriptional activator protein family. As to quaternary structure, monomer. Suppress local silencing by interacting with and inactivating host adenosine kinase 2 (ADK2) in the cytoplasm. Interacts with and inhibits host SNF1 kinase.

Its subcellular location is the host cytoplasm. Acts as a suppressor of RNA-mediated gene silencing, also known as post-transcriptional gene silencing (PTGS), a mechanism of plant viral defense that limits the accumulation of viral RNAs. Suppresses the host RNA silencing by inhibiting adenosine kinase 2 (ADK2), a kinase involved in a general methylation pathway. Also suppresses the host basal defense by interacting with and inhibiting SNF1 kinase, a key regulator of cell metabolism implicated in innate antiviral defense. Determines pathogenicity. The chain is Protein C2 from Tomato pseudo-curly top virus (TPCTV).